The primary structure comprises 448 residues: Guanine deaminase (448 aa).

The Zn(2+) site is built by histidine 74 and histidine 76. Substrate is bound by residues 76–79 (HAPQ), 204–205 (RF), 231–234 (HISE), and aspartate 319. Residues histidine 231 and aspartate 319 each contribute to the Zn(2+) site.

This sequence belongs to the metallo-dependent hydrolases superfamily. ATZ/TRZ family. Zn(2+) serves as cofactor.

The enzyme catalyses guanine + H2O + H(+) = xanthine + NH4(+). It participates in purine metabolism; guanine degradation; xanthine from guanine: step 1/1. Its activity is regulated as follows. Strongly inhibited by p-chloromercuribenzoate (PCMB). Potassium cyanide (KCN) strongly inhibits activity towards 7,8-dihydropterin but has almost no effect on activity towards guanine. Pterin inhibits activity towards guanine but has little effect on activity towards 7,8-dihydropterin. Catalyzes the hydrolytic deamination of guanine, producing xanthine and ammonia. Also has 7,8-dihydropterin deaminase activity, which plays a role in synthesis of the red eye pigment aurodrosopterin. In Drosophila melanogaster (Fruit fly), this protein is Guanine deaminase.